Reading from the N-terminus, the 415-residue chain is MSILETFDPQVAEAIRHETERQEYNLELIASENFVSEAVLEAQGSVMTNKYAEGYPGKRYYGGCHHVDVVENLAIERAKELFGADHANVQPHSGSQANMAVYFSVLKPGDTILGMNLSHGGHLTHGSPVNFSGRFFNVVPYGVSQETETIDFNEVERLALEHKPKMIVVGASAYPRTIDFAAFRIIADKVGAVIMVDMAHIAGLVAAGLHPSPVPYAEFVTTTTHKTLRGPRGGMILCREEYAKTLNSNIFPGIQGGPLMHVIAAKAVALKEALQPEFKAYQAQIVKNAKALADELVKRGFRLVSGGTDNHLMLVNLTGTELTGKVAEESLDKAGITVNKNTVPFETRSPFVTSGFRIGTPAATTHGLKEAEMADVAGFIAEALANVDNDAKLAEIKGRVNVLMKRFPLYAHRLS.

(6S)-5,6,7,8-tetrahydrofolate is bound by residues Leu117 and 121-123 (GHL). Residue Lys226 is modified to N6-(pyridoxal phosphate)lysine. Residues Glu241 and 349–351 (SPF) each bind (6S)-5,6,7,8-tetrahydrofolate.

It belongs to the SHMT family. Homodimer. Pyridoxal 5'-phosphate is required as a cofactor.

Its subcellular location is the cytoplasm. The enzyme catalyses (6R)-5,10-methylene-5,6,7,8-tetrahydrofolate + glycine + H2O = (6S)-5,6,7,8-tetrahydrofolate + L-serine. The protein operates within one-carbon metabolism; tetrahydrofolate interconversion. Its pathway is amino-acid biosynthesis; glycine biosynthesis; glycine from L-serine: step 1/1. In terms of biological role, catalyzes the reversible interconversion of serine and glycine with tetrahydrofolate (THF) serving as the one-carbon carrier. This reaction serves as the major source of one-carbon groups required for the biosynthesis of purines, thymidylate, methionine, and other important biomolecules. Also exhibits THF-independent aldolase activity toward beta-hydroxyamino acids, producing glycine and aldehydes, via a retro-aldol mechanism. The polypeptide is Serine hydroxymethyltransferase (Geobacter sulfurreducens (strain ATCC 51573 / DSM 12127 / PCA)).